The chain runs to 343 residues: Vancomycin C-type resistance protein VanC1 (343 aa).

The ATP-grasp domain maps to 134–336 (HQLADTMGIA…YEILVEQLIA (203 aa)). Residue 164–219 (IQDHGFPIFIKPNEAGSSKGITKVTDKTALQSALTTAFAYGSTVLIQKAIAGIEIG) participates in ATP binding. Mg(2+) is bound by residues Asp-290, Glu-303, and Asn-305. Residues Asp-290, Glu-303, and Asn-305 each contribute to the Mn(2+) site.

The protein belongs to the D-alanine--D-alanine ligase family. Mg(2+) serves as cofactor. Requires Mn(2+) as cofactor.

The protein resides in the cell membrane. It carries out the reaction D-serine + D-alanine + ATP = D-alanyl-D-serine + ADP + phosphate + H(+). In terms of biological role, D-alanine--D-alanine ligase of altered specificity, which catalyzes synthesis of D-Ala-D-Ser; produces a peptidoglycan which does not terminate in D-alanine but in D-serine, thus probably reducing affinity for vancomycin. Together with VanT and VanXYC, required for vancomycin resistance in E.gallinarum strain BM4174. The sequence is that of Vancomycin C-type resistance protein VanC1 from Enterococcus gallinarum.